The chain runs to 407 residues: MEITFLGTSSGVPTRTRNVSSVALRLPQRKEIWLFDCGEATQHQLLRSDLRTSQIRRIFITHMHGDHIFGLMGLLASCGLAGTVSQIDVYGPPTLDRYIASCLRWSVMRLPYKLQVHTVEPGEVFSDGEFTVTCRLLHHRVPAFGYRVTEGDRPGRFHVEKAQALGIPFGPLYGQLKQGKTITLEDGRTFDGRDFCDPPQRGRSMVYCTDTVFCDSAVELAQQADVLIHEATFSHQEANLAFARLHSTSTMAAQVAAFAQVKLLFLTHFSARYAPGNPVQVEDLLAEAQAIFPNTRLAQDFLHYAIPRDGQICAEMPPSDSPAAANIDTLEATLEPLEAQTVAADAKNAPAIAINRATRQQMQQKLGIDATTANAILERRRQQKFTCLGELERLYPQVDWSALNVLF.

A ribonuclease Z region spans residues 1–308 (MEITFLGTSS…QDFLHYAIPR (308 aa)). Residues histidine 62, histidine 64, aspartate 66, histidine 67, histidine 139, aspartate 210, and histidine 268 each coordinate Zn(2+). The active-site Proton acceptor is aspartate 66. A unknown region spans residues 309-407 (DGQICAEMPP…VDWSALNVLF (99 aa)).

It belongs to the RNase Z family. Homodimer. It depends on Zn(2+) as a cofactor.

It carries out the reaction Endonucleolytic cleavage of RNA, removing extra 3' nucleotides from tRNA precursor, generating 3' termini of tRNAs. A 3'-hydroxy group is left at the tRNA terminus and a 5'-phosphoryl group is left at the trailer molecule.. Functionally, zinc phosphodiesterase, which displays some tRNA 3'-processing endonuclease activity. Probably involved in tRNA maturation, by removing a 3'-trailer from precursor tRNA. This Thermosynechococcus vestitus (strain NIES-2133 / IAM M-273 / BP-1) protein is Ribonuclease Z (rnz).